The following is a 146-amino-acid chain: Large ribosomal subunit protein bL9 (146 aa).

The protein belongs to the bacterial ribosomal protein bL9 family.

Its function is as follows. Binds to the 23S rRNA. The chain is Large ribosomal subunit protein bL9 from Nautilia profundicola (strain ATCC BAA-1463 / DSM 18972 / AmH).